The chain runs to 381 residues: Creatine kinase M-type (381 aa).

Residues 11–98 (KLNYSAAEEF…FDPVIEDRHG (88 aa)) enclose the Phosphagen kinase N-terminal domain. Residues 125-367 (YVLSSRVRTG…KLMVEMEKRL (243 aa)) enclose the Phosphagen kinase C-terminal domain. Residues 128-132 (SSRVR), histidine 191, arginine 236, arginine 292, 320-325 (RGTGGV), and aspartate 335 contribute to the ATP site.

Belongs to the ATP:guanido phosphotransferase family. In terms of assembly, dimer of identical or non-identical chains. With MM being the major form in skeletal muscle and myocardium, MB existing in myocardium, and BB existing in many tissues, especially brain.

The protein localises to the cytoplasm. The catalysed reaction is creatine + ATP = N-phosphocreatine + ADP + H(+). Functionally, reversibly catalyzes the transfer of phosphate between ATP and various phosphogens (e.g. creatine phosphate). Creatine kinase isoenzymes play a central role in energy transduction in tissues with large, fluctuating energy demands, such as skeletal muscle, heart, brain and spermatozoa. This chain is Creatine kinase M-type, found in Torpedo marmorata (Marbled electric ray).